Here is a 335-residue protein sequence, read N- to C-terminus: Ankyrin repeat and SOCS box protein 1 (335 aa).

ANK repeat units lie at residues 36–68 (CEDT…RINE), 77–106 (LPCT…EVDL), 110–139 (KGQT…DPNG), 143–172 (HRST…DVDV), 191–220 (LVVC…NPDF), and 235–265 (SPGC…NLNL). Residues 286 to 335 (LQVFKEARSVPRTLLCLCRVAVRRALGKHRLHLIPSLPLPDPIKKFLLHE) enclose the SOCS box domain.

Belongs to the ankyrin SOCS box (ASB) family. In terms of assembly, interacts with CUL5 and RNF7. Interacts with TAB2 and TAB3.

It localises to the cytoplasm. Its pathway is protein modification; protein ubiquitination. Its function is as follows. Probable substrate-recognition component of a SCF-like ECS (Elongin-Cullin-SOCS-box protein) E3 ligase complex which mediates the ubiquitination and subsequent proteasomal degradation of target proteins. Mediates Notch-induced ubiquitination and degradation of TCF3/E2A and JAK2. Functions as a tumor suppressor by enhancing CHCHD3 'Lys-48'-linked ubiquitination, leading to inhibition of the CHCHD3/ROS signaling pathway. Suppresses TAB2-linked 'Lys-48' polyubiquitination and consequently facilitates the initiation of NF-kappa-B and MAPK signaling cascades. May play a role in testis development. The protein is Ankyrin repeat and SOCS box protein 1 (ASB1) of Homo sapiens (Human).